A 749-amino-acid chain; its full sequence is Protein lin-54 homolog (749 aa).

Lysine 139 participates in a covalent cross-link: Glycyl lysine isopeptide (Lys-Gly) (interchain with G-Cter in SUMO2). Lysine 244 and lysine 249 each carry N6-acetyllysine. 4 positions are modified to phosphoserine: serine 264, serine 282, serine 310, and serine 314. Lysine 357 is covalently cross-linked (Glycyl lysine isopeptide (Lys-Gly) (interchain with G-Cter in SUMO2)). Residues 369–388 form a disordered region; sequence ASSSTQPVSQNPSTNTQPLQ. Positions 521 to 634 constitute a CRC domain; sequence PRKPCNCTKS…KCIGCKNFEE (114 aa). The segment at 523-536 is DNA-binding; it reads KPCNCTKSLCLKLY. Zn(2+) is bound by residues cysteine 525, cysteine 527, cysteine 532, cysteine 537, cysteine 539, cysteine 546, cysteine 549, cysteine 551, and cysteine 554. The tract at residues 583-596 is linker; it reads IGKGKEGESDRRHS. Positions 599, 601, 606, 611, 613, 620, 624, 626, and 629 each coordinate Zn(2+). Positions 599–612 are DNA-binding; sequence CNCKRSGCLKNYCE. A Phosphoserine modification is found at serine 635. Glycyl lysine isopeptide (Lys-Gly) (interchain with G-Cter in SUMO2) cross-links involve residues lysine 639, lysine 659, and lysine 661.

The protein belongs to the lin-54 family. As to quaternary structure, component of the DREAM complex (also named LINC complex) at least composed of E2F4, E2F5, LIN9, LIN37, LIN52, LIN54, MYBL1, MYBL2, RBL1, RBL2, RBBP4, TFDP1 and TFDP2. The complex exists in quiescent cells where it represses cell cycle-dependent genes. It dissociates in S phase when LIN9, LIN37, LIN52 and LIN54 form a subcomplex that binds to MYBL2.

The protein resides in the nucleus. In terms of biological role, component of the DREAM complex, a multiprotein complex that can both act as a transcription activator or repressor depending on the context. In G0 phase, the complex binds to more than 800 promoters and is required for repression of E2F target genes. In S phase, the complex selectively binds to the promoters of G2/M genes whose products are required for mitosis and participates in their cell cycle dependent activation. In the complex, acts as a DNA-binding protein that binds the promoter of CDK1 in a sequence-specific manner. Specifically recognizes the consensus motif 5'-TTYRAA-3' in target DNA. The polypeptide is Protein lin-54 homolog (LIN54) (Homo sapiens (Human)).